The following is a 313-amino-acid chain: Ribosomal protein L11 methyltransferase (313 aa).

S-adenosyl-L-methionine contacts are provided by T164, G185, D207, and N249.

It belongs to the methyltransferase superfamily. PrmA family.

The protein localises to the cytoplasm. The catalysed reaction is L-lysyl-[protein] + 3 S-adenosyl-L-methionine = N(6),N(6),N(6)-trimethyl-L-lysyl-[protein] + 3 S-adenosyl-L-homocysteine + 3 H(+). Its function is as follows. Methylates ribosomal protein L11. The chain is Ribosomal protein L11 methyltransferase from Clostridium botulinum (strain Alaska E43 / Type E3).